Reading from the N-terminus, the 487-residue chain is UDP-N-acetylmuramoyl-L-alanyl-D-glutamate--2,6-diaminopimelate ligase (487 aa).

Residues Leu-23 and Ser-25 each coordinate UDP-N-acetyl-alpha-D-muramoyl-L-alanyl-D-glutamate. 108 to 114 (GTNGKTS) lines the ATP pocket. UDP-N-acetyl-alpha-D-muramoyl-L-alanyl-D-glutamate is bound by residues 150-151 (TT), Ser-177, Gln-183, and Arg-185. Lys-217 bears the N6-carboxylysine mark. Meso-2,6-diaminopimelate-binding positions include Arg-378, 402–405 (DNPR), Gly-453, and Glu-457. Positions 402 to 405 (DNPR) match the Meso-diaminopimelate recognition motif motif.

It belongs to the MurCDEF family. MurE subfamily. Mg(2+) serves as cofactor. In terms of processing, carboxylation is probably crucial for Mg(2+) binding and, consequently, for the gamma-phosphate positioning of ATP.

Its subcellular location is the cytoplasm. The catalysed reaction is UDP-N-acetyl-alpha-D-muramoyl-L-alanyl-D-glutamate + meso-2,6-diaminopimelate + ATP = UDP-N-acetyl-alpha-D-muramoyl-L-alanyl-gamma-D-glutamyl-meso-2,6-diaminopimelate + ADP + phosphate + H(+). It functions in the pathway cell wall biogenesis; peptidoglycan biosynthesis. Its function is as follows. Catalyzes the addition of meso-diaminopimelic acid to the nucleotide precursor UDP-N-acetylmuramoyl-L-alanyl-D-glutamate (UMAG) in the biosynthesis of bacterial cell-wall peptidoglycan. The sequence is that of UDP-N-acetylmuramoyl-L-alanyl-D-glutamate--2,6-diaminopimelate ligase from Pseudomonas syringae pv. tomato (strain ATCC BAA-871 / DC3000).